Here is a 1088-residue protein sequence, read N- to C-terminus: Protocadherin-19 (1088 aa).

The first 24 residues, Met-1 to Ala-24, serve as a signal peptide directing secretion. The Extracellular segment spans residues Val-25–Ser-678. 6 Cadherin domains span residues Thr-31–Phe-130, Pro-131–Phe-239, Asp-240–Ile-347, Ser-351–Phe-454, Thr-455–Met-563, and Val-569–Asn-676. Ca(2+) is bound by residues Glu-34 and Glu-35. Asn-44 is a glycosylation site (N-linked (GlcNAc...) asparagine). Ca(2+) contacts are provided by Asp-89 and Asp-91. Residues Cys-94 and Cys-100 are joined by a disulfide bond. Residues Asp-122, Val-123, Asn-124, Asp-125, Asn-126, Glu-141, Asp-156, Asp-158, Asn-162, Glu-200, Asp-213, Asp-231, Ser-232, Asn-233, Asp-234, Asn-235, and Glu-250 each contribute to the Ca(2+) site. N-linked (GlcNAc...) asparagine glycosylation is present at Asn-262. Positions 265, 267, and 271 each coordinate Ca(2+). N-linked (GlcNAc...) asparagine glycosylation occurs at Asn-284. Residues Asp-306, Glu-308, Asp-339, Ile-340, Asn-341, Asp-342, Asn-343, Glu-361, and Asp-376 each coordinate Ca(2+). N-linked (GlcNAc...) asparagine glycosylation is present at Asn-377. 4 residues coordinate Ca(2+): Asp-378, Asn-382, Asp-413, and Glu-415. N-linked (GlcNAc...) asparagine glycosylation is present at Asn-421. Ca(2+) contacts are provided by Asp-428, Asp-446, Glu-447, Asn-448, Asp-449, Asn-450, Glu-465, Asp-480, Asp-482, Asn-486, Asn-522, Glu-524, and Asp-537. An N-linked (GlcNAc...) asparagine glycan is attached at Asn-486. The N-linked (GlcNAc...) asparagine glycan is linked to Asn-546. Ca(2+) is bound by residues Asp-555, Val-556, Asn-557, Asp-558, and Asn-559. An N-linked (GlcNAc...) asparagine glycan is attached at Asn-570. Ca(2+) is bound by residues Asp-594, Asp-596, Asn-600, and Asp-646. Asn-676 carries an N-linked (GlcNAc...) asparagine glycan. A helical transmembrane segment spans residues Leu-679 to Val-699. At Ala-700 to Leu-1088 the chain is on the cytoplasmic side. 4 disordered regions span residues Asn-792–Gln-813, Asp-851–Gln-875, Thr-970–Thr-1032, and Thr-1067–Leu-1088. The span at Asp-859–Gln-875 shows a compositional bias: basic and acidic residues. The span at Asp-1071–Leu-1088 shows a compositional bias: basic and acidic residues.

In terms of assembly, homodimer; antiparallel. Interacts with cadherin cdh2; the interaction confers robust cell adhesion activity on pcdh19. In terms of tissue distribution, in the embryo, strongly expressed in the developing nervous system. At 12 hours post fertilization (hpf), shows a segmental expression pattern in the anterior third of the neural keel with strong expression in the presumptive forebrain, cerebellum/rhombomere 1 and rhombomere 4. By 24 hpf, expressed widely in the brain and spinal cord with higher expression levels in the ventral telencephalon, dorsal and central thalamus, optic tectum, central tegmentum, cerebellum and dorsolateral regions of the hindbrain. As development proceeds, expression becomes restricted to the dorsal and/or lateral regions of the central nervous system. Not detected in the spinal cord of two- and three-day old embryos. Expressed in the eye primordium, developing retina, lens and otic vesicle. Expressed in the larval optic tectum at 4 days post-fertilization where it localizes in discrete columns of neurons. Expressed throughout the adult brain with strong expression in the ventromedial telencephalon, periventricular regions of the thalamus and anterior hypothalamus, stratum periventriculare of the optic tectum, dorsal tegmental nucleus, granular regions of the cerebellar body and valvula, and superficial layers of the facial and vagal lobes.

The protein resides in the cell membrane. Its function is as follows. Calcium-dependent cell-adhesion protein. Essential for the early stages of neurulation in the anterior neural plate. Shows little cell adhesion activity on its own but exhibits robust homophilic cell adhesion when in a complex with cadherin cdh2 and appears to mediate the adhesion while cdh2 acts as a cell adhesion cofactor in the complex. Functions with cdh2 to coordinate cell adhesion and cell movements during neurulation. Contributes to neural progenitor cell patterning with cdh2 by promoting homophilic cell interactions. Regulates the columnar organization of neurons in the optic tectum. This chain is Protocadherin-19, found in Danio rerio (Zebrafish).